The sequence spans 126 residues: uncharacterized protein (126 aa).

An N-terminal signal peptide occupies residues 1–27; the sequence is MKNLFIFLSLMMMFVLTACGGSKYDDA. The segment at 93 to 126 is disordered; it reads MTDMPGNGENDRLGLSKKTPDYEEVKGEETELEE. Over residues 101-126 the composition is skewed to basic and acidic residues; it reads ENDRLGLSKKTPDYEEVKGEETELEE.

This is an uncharacterized protein from Bacillus subtilis (strain 168).